Reading from the N-terminus, the 1993-residue chain is Otoferlin (1993 aa).

Residues 1-98 (MALIVHLKTV…VEENRVEVSD (98 aa)) enclose the C2 1 domain. The Cytoplasmic portion of the chain corresponds to 1 to 1959 (MALIVHLKTV…IKYLICTRYK (1959 aa)). The disordered stretch occupies residues 127 to 212 (PWDDGDFLGD…KEEPQRQDEP (86 aa)). The segment covering 129–145 (DDGDFLGDESLQEEEKD) has biased composition (acidic residues). Composition is skewed to basic and acidic residues over residues 163–186 (PGEK…EHKA) and 202–211 (HKEEPQRQDE). C2 domains follow at residues 251–372 (KRSK…HKWA) and 415–546 (IEGN…FLPT). The interval 654–708 (NYGNEVDGTSRPQRPRPRKEPGDEEEVDLIQNSSDDEGDEAGDLASVSSTPPMRP) is disordered. Residues 675 to 695 (GDEEEVDLIQNSSDDEGDEAG) show a composition bias toward acidic residues. Positions 807 to 836 (RERLKSCMRELESMGQQAKSLRAQVKRHTV) form a coiled coil. C2 domains lie at 959–1084 (LHSF…PPRF) and 1131–1257 (RGPI…ANWN). Ca(2+) is bound by residues Asp-991, Asp-997, Asp-1053, Asp-1055, and Asp-1061. 2 disordered regions span residues 1294–1318 (AEDE…EEPD) and 1339–1398 (LRQH…EKKK). Residues 1348–1357 (DLEEKEEMDS) show a composition bias toward acidic residues. A compositionally biased stretch (basic and acidic residues) spans 1366–1379 (KNKEKSRAAKEEKK). C2 domains are found at residues 1460–1589 (LPED…ATCG) and 1710–1861 (DMPA…KQCT). Residues Asp-1504, Asp-1510, Asp-1559, Asp-1561, Asp-1567, Asp-1832, Ser-1835, and Asp-1838 each contribute to the Ca(2+) site. Residues 1960–1980 (WLIIKIVLALLGLLMLALFLY) traverse the membrane as a helical segment. At 1981–1993 (SLPGYMVKKLLGA) the chain is on the extracellular side.

The protein belongs to the ferlin family. In terms of assembly, interacts with SNAP25; the interaction is direct. Interacts with STX1; the interaction is direct. Interacts with RAB8B. It depends on Ca(2+) as a cofactor. In terms of tissue distribution, isoform 1 is expressed in the cochlea and brain. Expressed in cerebellum (Purkinje cells), hippocampus (granule cells of the dentate gyrus and in pyramidal cells of the CA1-CA3 region) and cortex (stellate and pyramidal cells). Expressed in hair cells of vestibular organs such as the saccule, utricle and crista ampullari. Expressed in the cochlear inner and outer cells (IHCs and OHCs) (at protein level). Expressed in brain: brainstem, cerebellum (granules cells and Purkinje cell layer), cortex (layers IV and V), inferior colliculus, superior colliculus and hippocampus (granule cells of the dentate gyrus and in pyramidal cells of the CA1-CA3 region).

It localises to the cytoplasmic vesicle. The protein resides in the secretory vesicle. The protein localises to the synaptic vesicle membrane. Its subcellular location is the basolateral cell membrane. It is found in the endoplasmic reticulum membrane. It localises to the golgi apparatus membrane. The protein resides in the presynaptic cell membrane. The protein localises to the cell membrane. In terms of biological role, key calcium ion sensor involved in the Ca(2+)-triggered synaptic vesicle-plasma membrane fusion and in the control of neurotransmitter release at these output synapses. Interacts in a calcium-dependent manner to the presynaptic SNARE proteins at ribbon synapses of cochlear inner hair cells (IHCs) to trigger exocytosis of neurotransmitter. Also essential to synaptic exocytosis in immature outer hair cells (OHCs). May also play a role within the recycling of endosomes. The sequence is that of Otoferlin (Otof) from Rattus norvegicus (Rat).